The following is a 368-amino-acid chain: MATTAQYIPRNNSLPSNPLMHPDSDRMHQGTTYREVQKMMHHEYLQGLATNTGHPMSLTHHQWLPTSNTDWTSGTHIGQAEHNKASVQSREDLGNGYHRSHLVHQPTQNSHHGSWAPTTTHHLSPLSPASNGHQSLVYSQTGYTMLSPQPSLHHGLRDPLHDDAGSHDNQMESPQQPFSHHQDHSDEDAPSSDDLEQFAKQFKQRRIKLGFTQADVGLALGTLYGNVFSQTTICRFEALQLSFKNMCKLKPLLNKWLEETDSNTGSPTNLDKIAAQGRKRKKRTSIEVGVKGALENHFLKCPKPSAHEITTLAGTLQLEKEVVRVWFCNRRQKEKRMTPVGVPHPTMEDVYSQAETPPLHHTLQSPVQ.

Polar residues predominate over residues 1 to 16 (MATTAQYIPRNNSLPS). Disordered regions lie at residues 1 to 28 (MATTAQYIPRNNSLPSNPLMHPDSDRMH), 69 to 88 (TDWTSGTHIGQAEHNKASVQ), 100 to 134 (SHLVHQPTQNSHHGSWAPTTTHHLSPLSPASNGHQ), and 147 to 193 (SPQP…PSSD). A compositionally biased stretch (basic and acidic residues) spans 79–88 (QAEHNKASVQ). A compositionally biased stretch (polar residues) spans 105–134 (QPTQNSHHGSWAPTTTHHLSPLSPASNGHQ). Basic and acidic residues predominate over residues 155 to 170 (GLRDPLHDDAGSHDNQ). The region spanning 187–261 (EDAPSSDDLE…LLNKWLEETD (75 aa)) is the POU-specific domain. Residues 279-338 (KRKKRTSIEVGVKGALENHFLKCPKPSAHEITTLAGTLQLEKEVVRVWFCNRRQKEKRMT) constitute a DNA-binding region (homeobox).

The protein belongs to the POU transcription factor family. Class-3 subfamily. In terms of tissue distribution, predominantly expressed in the embryonic and adult central nervous system.

Its subcellular location is the nucleus. Transcription factor that may play important roles in patterning the embryonic brain. Could directly respond to the reception of the sonic hedgehog (shh) signal. The chain is POU domain, class 3, transcription factor 1 (pou3f1) from Danio rerio (Zebrafish).